We begin with the raw amino-acid sequence, 148 residues long: Small ribosomal subunit protein bS6 (148 aa).

The disordered stretch occupies residues 96 to 148; sequence HEEGQSAMLTRRDDRRERDGDDRPRRREGGFDRGDRGDRSPRRPRDNEAGEGA.

This sequence belongs to the bacterial ribosomal protein bS6 family.

Functionally, binds together with bS18 to 16S ribosomal RNA. The sequence is that of Small ribosomal subunit protein bS6 from Brucella suis (strain ATCC 23445 / NCTC 10510).